The sequence spans 275 residues: AA9 family lytic polysaccharide monooxygenase AA9-X282 (275 aa).

An N-terminal signal peptide occupies residues 1–17; it reads MFTKLIIAASLAASVAA. A Cu(2+)-binding site is contributed by H18. T20 carries the post-translational modification Phosphothreonine. Phosphoserine occurs at positions 43 and 49. A Phosphothreonine modification is found at T50. At S58 the chain carries Phosphoserine. C66 and C185 form a disulfide bridge. H96 contributes to the Cu(2+) binding site. At S130 the chain carries Phosphoserine. H171 and Q180 together coordinate O2. Position 182 (Y182) interacts with Cu(2+). The segment at 236-265 is X282 extension; the sequence is TSPAVANTPYPTTATWNTALQPSTVPTAVP. Residues 268 to 275 carry the 9res motif motif; that stretch reads GTPGIGKA.

The protein belongs to the polysaccharide monooxygenase AA9 family. The cofactor is Cu(2+).

Its subcellular location is the secreted. It carries out the reaction [(1-&gt;4)-beta-D-glucosyl]n+m + reduced acceptor + O2 = 4-dehydro-beta-D-glucosyl-[(1-&gt;4)-beta-D-glucosyl]n-1 + [(1-&gt;4)-beta-D-glucosyl]m + acceptor + H2O.. In terms of biological role, lytic polysaccharide monooxygenase (LPMO) that depolymerizes crystalline and amorphous polysaccharides via the oxidation of scissile alpha- or beta-(1-4)-glycosidic bonds, yielding C1 oxidation products. Catalysis by LPMOs requires the reduction of the active-site copper from Cu(II) to Cu(I) by a reducing agent and H(2)O(2) or O(2) as a cosubstrate. Shows only weak binding properties to cellulose, and low cellulolytic oxidative activity which questions the involvement of X282 extension-containing AA9 proteins in the degradation of plant cell wall and opens new avenues as to the divergence of function of some AA9 members. In Trametes coccinea (strain BRFM310) (Pycnoporus coccineus), this protein is AA9 family lytic polysaccharide monooxygenase AA9-X282.